The primary structure comprises 714 residues: Phenylalanine 2-monooxygenase precursor (714 aa).

Residues 1 to 15 constitute a propeptide, removed in mature form; occupies the channel of the substrate amino acid from the outside of the protein to the interior flavin ring in the precursor; the sequence is MGVTVIPRLLGLKDE. FAD is bound by residues G2, G68, and 95-96; that span reads EA. Positions 108–109 are cleaved as a propeptide — linker peptide; the sequence is IK. FAD-binding positions include R120, 141–144, and V375; that span reads GAMR. R144 lines the substrate pocket. Y537 is a substrate binding site. FAD is bound by residues 652 to 653 and 660 to 662; these read SD and GWL. G660 is a binding site for substrate.

Belongs to the phenylalanine 2-monooxygenase family. As to quaternary structure, heterotetramer composed of 2 alpha and 2 beta subunits. Requires FAD as cofactor. In terms of processing, proteolytically cleaved to yield the active enzyme. Cleavage of the linkage between the 2 subunits causes reshaping of the oxygen channel and the hydrophobic environment around the flavin ring. Removal of the prosequence causes opening of the amino acid channel.

It carries out the reaction L-phenylalanine + O2 = 2-phenylacetamide + CO2 + H2O. Functionally, catalyzes both oxygenative decarboxylation and oxidative deamination, depending on the substrate used. Has high activity for L-Phe and L-Tyr, but relatively low activities for L-Met and L-Trp. L-Phe is mainly oxygenated and L-Met is mainly oxidized. The protein is Phenylalanine 2-monooxygenase precursor of Pseudomonas sp.